A 340-amino-acid polypeptide reads, in one-letter code: GTPase Obg (340 aa).

The Obg domain occupies 1–159 (MDFIDEVKLY…KYVVLKLKVL (159 aa)). The region spanning 160–329 (SDVGIIGMPN…LNEKLKKGSS (170 aa)) is the OBG-type G domain. GTP contacts are provided by residues 166 to 173 (GMPNAGKS), 191 to 195 (FTTIK), 212 to 215 (DIPG), 279 to 282 (NKCD), and 310 to 312 (GED). The Mg(2+) site is built by Ser173 and Thr193.

This sequence belongs to the TRAFAC class OBG-HflX-like GTPase superfamily. OBG GTPase family. As to quaternary structure, monomer. Mg(2+) serves as cofactor.

Its subcellular location is the cytoplasm. In terms of biological role, an essential GTPase which binds GTP, GDP and possibly (p)ppGpp with moderate affinity, with high nucleotide exchange rates and a fairly low GTP hydrolysis rate. Plays a role in control of the cell cycle, stress response, ribosome biogenesis and in those bacteria that undergo differentiation, in morphogenesis control. This chain is GTPase Obg, found in Wolbachia sp. subsp. Brugia malayi (strain TRS).